The chain runs to 109 residues: Stress-response A/B barrel domain-containing protein HS1 (109 aa).

Residues Val-8–Tyr-102 enclose the Stress-response A/B barrel domain. Val-36, Ile-39, Glu-40, and Met-42 together coordinate Mg(2+).

As to quaternary structure, homodimer. Mg(2+) is required as a cofactor.

In terms of biological role, heat stable protein involved in defense against fungal pathogens. Possesses antifungal activity against diverse pathogenic fungi. Possesses antimicrobial activity. Possesses ribonuclease activity. This Arabidopsis thaliana (Mouse-ear cress) protein is Stress-response A/B barrel domain-containing protein HS1.